We begin with the raw amino-acid sequence, 299 residues long: Protoheme IX farnesyltransferase (299 aa).

9 helical membrane-spanning segments follow: residues 29–49 (VVTL…PGAV), 51–71 (LQPL…AAAM), 100–120 (HAAT…YWLV), 123–143 (LTAW…TAYL), 150–170 (NIVI…TAVT), 177–197 (GLLL…ALAI), 223–243 (CIFL…LVGM), 244–264 (SGAL…YKAW), and 275–295 (AMDV…LLLV).

It belongs to the UbiA prenyltransferase family. Protoheme IX farnesyltransferase subfamily.

It is found in the cell inner membrane. It catalyses the reaction heme b + (2E,6E)-farnesyl diphosphate + H2O = Fe(II)-heme o + diphosphate. The protein operates within porphyrin-containing compound metabolism; heme O biosynthesis; heme O from protoheme: step 1/1. In terms of biological role, converts heme B (protoheme IX) to heme O by substitution of the vinyl group on carbon 2 of heme B porphyrin ring with a hydroxyethyl farnesyl side group. This is Protoheme IX farnesyltransferase from Shewanella amazonensis (strain ATCC BAA-1098 / SB2B).